Here is a 262-residue protein sequence, read N- to C-terminus: Troponin T, slow skeletal muscle (262 aa).

Residues 1 to 31 are compositionally biased toward acidic residues; that stretch reads MSDTEEQEYEEEQAEDEEAVEEEEAPEEPEP. Disordered stretches follow at residues 1-62 and 109-153; these read MSDT…ERVD and ERAE…KKKV. Serine 2 is modified (phosphoserine; by CK2). The segment covering 32 to 41 has biased composition (basic and acidic residues); that stretch reads VAEREEERPK. A compositionally biased stretch (pro residues) spans 43–55; the sequence is SRPVVPPLIPPKI. The span at 109–149 shows a compositional bias: basic and acidic residues; sequence ERAEQQRFRTEKERERQAKLAEEKMRKEEEEAKKRAEDDAK.

Belongs to the troponin T family. As to quaternary structure, interacts with TPM3. Expressed in adult soleus muscle.

Functionally, troponin T is the tropomyosin-binding subunit of troponin, the thin filament regulatory complex which confers calcium-sensitivity to striated muscle actomyosin ATPase activity. In Mus musculus (Mouse), this protein is Troponin T, slow skeletal muscle (Tnnt1).